A 434-amino-acid polypeptide reads, in one-letter code: MDPVEAYGRVKSSILEHHKWFDSSLPMIASENVTSPAVRKAMTSDFGHRYAEGWVGERVYAGTKYIDEVESIAMELVKRLFNVKFADVRPISGVVANLAVYTAFTNPGDVAMALPITKGGHISMGPLRGSEGQFIGGTAGAVRGLDVKYLAFDDHNMNVDVDKSIKRIEENKPKLVILGGSVILFPHPVKELSDVCKSVGALLHYDAAHVAGLIAGKQFQQPMEEGADVMTMSTHKTFFGPQHGAVITNDEEKFERIKLANFPGLLSNHHLHSVAALALAAAEMLAFGEEYARAVVRNAKALAQALHDEGFSVVAEHLGFTQSHQVLLDVDALGGGHRCEKLLEEANIIVNRNLLPWDIKRGRSFKDPGGLRLGVSELTRLGMGEEEMKEIAKLYRKVLLDREDPKKVAGEVSELRKRFRNVKYAFEEGPAYEY.

120–122 (GHI) is a (6S)-5,6,7,8-tetrahydrofolate binding site. Lys236 is subject to N6-(pyridoxal phosphate)lysine. Position 255 (Glu255) interacts with (6S)-5,6,7,8-tetrahydrofolate.

This sequence belongs to the SHMT family. As to quaternary structure, homodimer. Pyridoxal 5'-phosphate serves as cofactor.

The protein localises to the cytoplasm. It functions in the pathway amino-acid biosynthesis; glycine biosynthesis; glycine from L-serine: step 1/1. Functionally, catalyzes the reversible interconversion of serine and glycine with a modified folate serving as the one-carbon carrier. Also exhibits a pteridine-independent aldolase activity toward beta-hydroxyamino acids, producing glycine and aldehydes, via a retro-aldol mechanism. The sequence is that of Serine hydroxymethyltransferase from Korarchaeum cryptofilum (strain OPF8).